The primary structure comprises 464 residues: Asparagine--tRNA ligase (464 aa).

Belongs to the class-II aminoacyl-tRNA synthetase family. Homodimer.

The protein localises to the cytoplasm. The catalysed reaction is tRNA(Asn) + L-asparagine + ATP = L-asparaginyl-tRNA(Asn) + AMP + diphosphate + H(+). The protein is Asparagine--tRNA ligase of Acetivibrio thermocellus (strain ATCC 27405 / DSM 1237 / JCM 9322 / NBRC 103400 / NCIMB 10682 / NRRL B-4536 / VPI 7372) (Clostridium thermocellum).